The chain runs to 425 residues: Serine--tRNA ligase (425 aa).

Threonine 231–glutamate 233 is a binding site for L-serine. An ATP-binding site is contributed by arginine 262 to glutamate 264. Glutamate 285 contacts L-serine. Glutamate 349–serine 352 provides a ligand contact to ATP. Residue serine 385 coordinates L-serine.

Belongs to the class-II aminoacyl-tRNA synthetase family. Type-1 seryl-tRNA synthetase subfamily. In terms of assembly, homodimer. The tRNA molecule binds across the dimer.

It localises to the cytoplasm. The enzyme catalyses tRNA(Ser) + L-serine + ATP = L-seryl-tRNA(Ser) + AMP + diphosphate + H(+). It catalyses the reaction tRNA(Sec) + L-serine + ATP = L-seryl-tRNA(Sec) + AMP + diphosphate + H(+). Its pathway is aminoacyl-tRNA biosynthesis; selenocysteinyl-tRNA(Sec) biosynthesis; L-seryl-tRNA(Sec) from L-serine and tRNA(Sec): step 1/1. Its function is as follows. Catalyzes the attachment of serine to tRNA(Ser). Is also able to aminoacylate tRNA(Sec) with serine, to form the misacylated tRNA L-seryl-tRNA(Sec), which will be further converted into selenocysteinyl-tRNA(Sec). This Halalkalibacterium halodurans (strain ATCC BAA-125 / DSM 18197 / FERM 7344 / JCM 9153 / C-125) (Bacillus halodurans) protein is Serine--tRNA ligase.